The primary structure comprises 564 residues: MVNKEEAQRLKELGNKCFQEGKYEEAVKYFSDAITNDPLDHVLYSNLSGAFASLGRFYEALESANKCISIKKDWPKGYIRKGCAEHGLRQLSNAEKTYLEGLKIDPNNKSLQDALSKVRNENMLENAQLIAHLNNIIENDPQLKSYKEENSNYPHELLNTIKSINSNPMNIRIILSTCHPKISEGVEKFFGFKFTGEGNDAEERQRQQREEEERRKKKEEEERKKKEEEEMKKQNRTPEQIQGDEHKLKGNEFYKQKKFDEALKEYEEAIQINPNDIMYHYNKAAVHIEMKNYDKAVETCLYAIENRYNFKAEFIQVAKLYNRLAISYINMKKYDLAIEAYRKSLVEDNNRATRNALKELERRKEKEEKEAYIDPDKAEEHKNKGNEYFKNNDFPNAKKEYDEAIRRNPNDAKLYSNRAAALTKLIEYPSALEDVMKAIELDPTFVKAYSRKGNLHFFMKDYYKALQAYNKGLELDPNNKECLEGYQRCAFKIDEMSKSEKVDEEQFKKSMADPEIQQIISDPQFQIILQKLNENPNSISEYIKDPKIFNGLQKLIAAGILKVR.

TPR repeat units lie at residues 7 to 40 (AQRL…DPLD), 42 to 74 (VLYS…KKDW), and 76 to 108 (KGYI…DPNN). The stretch at 197-239 (EGNDAEERQRQQREEEERRKKKEEEERKKKEEEEMKKQNRTPE) forms a coiled coil. The segment at 199-247 (NDAEERQRQQREEEERRKKKEEEERKKKEEEEMKKQNRTPEQIQGDEHK) is disordered. A compositionally biased stretch (basic and acidic residues) spans 201 to 233 (AEERQRQQREEEERRKKKEEEERKKKEEEEMKK). 6 TPR repeats span residues 243-276 (GDEH…NPND), 278-310 (MYHY…RYNF), 318-351 (AKLY…DNNR), 378-411 (AEEH…NPND), 413-445 (KLYS…DPTF), and 446-479 (VKAY…DPNN). One can recognise an STI1 domain in the interval 513–552 (DPEIQQIISDPQFQIILQKLNENPNSISEYIKDPKIFNGL).

In terms of assembly, monomer. Homodimer. Forms a complex composed of HOP and chaperones HSP70 and HSP90; the interaction is stronger in the absence of ATP. Interacts (via TPR 1, 2, 3, 7, 8 and 9 repeats) with HSP70 (via C-terminus); the interaction is direct and is stronger in the absence of ATP. Interacts (via TPR 4, 5 and 6 repeats) with HSP90 (via C-terminus); the interaction is direct.

Its subcellular location is the cytoplasm. Functionally, acts as a co-chaperone and mediates the association of the chaperones HSP70 and HSP90 probably facilitating substrate transfer from HSP70 to HSP90. Stimulates HSP70 ATPase activity and, in contrast, inhibits HSP90 ATPase activity. This chain is Hsp70-Hsp90 organising protein, found in Plasmodium falciparum (isolate 3D7).